The following is a 101-amino-acid chain: Protein translation factor SUI1 homolog (101 aa).

The protein belongs to the SUI1 family.

The protein is Protein translation factor SUI1 homolog of Methanothermobacter thermautotrophicus (strain ATCC 29096 / DSM 1053 / JCM 10044 / NBRC 100330 / Delta H) (Methanobacterium thermoautotrophicum).